The following is a 298-amino-acid chain: DNA-3-methyladenine glycosylase (298 aa).

A mitochondrion-targeting transit peptide spans 1-17; sequence MVTPALQMKKPKQFCRR. The interval 1 to 65 is disordered; sequence MVTPALQMKK…CPRERCLGPP (65 aa). A compositionally biased stretch (basic residues) spans 9–25; sequence KKPKQFCRRMGQKKQRP. S78 and S252 each carry phosphoserine.

The protein belongs to the DNA glycosylase MPG family. Binds MBD1. Binds SSBP1.

It localises to the cytoplasm. The protein localises to the mitochondrion matrix. Its subcellular location is the mitochondrion nucleoid. The protein resides in the nucleus. The catalysed reaction is Hydrolysis of alkylated DNA, releasing 3-methyladenine, 3-methylguanine, 7-methylguanine and 7-methyladenine.. Its activity is regulated as follows. Binding to SSBP1 in mitochondria inhibits glycosylase activity in the context of a single-stranded DNA (ssDNA), but not a double-stranded DNA (dsDNA) substrates. In terms of biological role, hydrolysis of the deoxyribose N-glycosidic bond to excise 3-methyladenine, and 7-methylguanine from the damaged DNA polymer formed by alkylation lesions. The protein is DNA-3-methyladenine glycosylase (MPG) of Homo sapiens (Human).